A 54-amino-acid polypeptide reads, in one-letter code: MLYYVLVFLVVALVAGALGFGGIAGASAGIAQILFFVFLALLVISLIASAIRKA.

2 helical membrane-spanning segments follow: residues 5 to 25 and 29 to 48; these read VLVF…GIAG and GIAQ…SLIA.

It belongs to the UPF0391 family.

It localises to the cell membrane. This Brucella abortus (strain 2308) protein is UPF0391 membrane protein BAB1_1670.